We begin with the raw amino-acid sequence, 262 residues long: MAIITMKSLLEAGVHFGHQVKRLDPRMKRFIFSERNEIHILDLQKTLQGIKDSYELVQRVIKDGKKVLFVGTKKQASEIIEQEARRSDMPYVNNRWLGGMLSNFNTIRKSVQKLKKLEKMEVDGTFDMISKKEISQLNREKFKLAKNLTGIKDMETLPGAIFIIDPKREQIAINEARKLKIPIISVVDTNCNPDVIDCPIPGNDDAIRSVALFTKIISDAILESDKEVGIQIIENLNEEDLMKEIEIKNDKSDSIEEGRSNL.

It belongs to the universal ribosomal protein uS2 family.

This chain is Small ribosomal subunit protein uS2, found in Borrelia garinii subsp. bavariensis (strain ATCC BAA-2496 / DSM 23469 / PBi) (Borreliella bavariensis).